The chain runs to 409 residues: E3 ubiquitin-protein ligase MARCHF4 (409 aa).

An N-terminal signal peptide occupies residues Met-1 to Gly-17. The disordered stretch occupies residues Gly-92–Ala-133. The segment covering Pro-102–Pro-112 has biased composition (pro residues). The segment at Asp-154 to Ile-214 adopts an RING-CH-type zinc-finger fold. Residues Cys-162, Cys-165, Cys-178, Cys-180, His-188, Cys-191, Cys-204, and Cys-207 each coordinate Zn(2+). 2 helical membrane-spanning segments follow: residues Leu-242–Ser-262 and Leu-271–Ile-291. Disordered regions lie at residues Glu-323 to Ser-372 and Pro-389 to Val-409. Residues Gly-328 to Leu-343 are compositionally biased toward polar residues.

It localises to the golgi apparatus membrane. It catalyses the reaction S-ubiquitinyl-[E2 ubiquitin-conjugating enzyme]-L-cysteine + [acceptor protein]-L-lysine = [E2 ubiquitin-conjugating enzyme]-L-cysteine + N(6)-ubiquitinyl-[acceptor protein]-L-lysine.. It functions in the pathway protein modification; protein ubiquitination. Its function is as follows. E3 ubiquitin-protein ligase that may mediate ubiquitination of MHC-I and CD4, and promote their subsequent endocytosis and sorting to lysosomes via multivesicular bodies. E3 ubiquitin ligases accept ubiquitin from an E2 ubiquitin-conjugating enzyme in the form of a thioester and then directly transfer the ubiquitin to targeted substrates. This Mus musculus (Mouse) protein is E3 ubiquitin-protein ligase MARCHF4 (Marchf4).